Consider the following 368-residue polypeptide: MSLFPPASCPRLIVKIGSALLVDPGGAVRRDWLTGIAADIAERARAGQQVAVVSSGAIALGARRLGLAKGGRASLEDAQAAAATGQIALSQVWAEVLGAEGLTAAQMLVTLGDLEHRRRYLNAAATLDRLLSLGVVPIINENDSVATEEIRFGDNDRLAARVAQAAAARGVILLSDIDGLYDRNPAQPGAVHIERIERIDAAIEAMADTGSASGMGSGGMVSKIAAARIANAAGAHLAIASGRIDRPLSTAARHSLFVAERGASARKAWLAGGLTAEGRLTIDAGAVKALVGGASLLAAGVTAVSGSFARGDILDIVGPDGRVVARGLSEYPAADAAAIVGLGRDAQEAALGYAPRSAIVHRDHMVLL.

Residue Lys15 participates in ATP binding. Substrate is bound by residues Ser55, Asp143, and Asn155. ATP-binding positions include Ser175–Asp176 and Ser217–Lys223. One can recognise a PUA domain in the interval Glu277–Ala354.

The protein belongs to the glutamate 5-kinase family.

The protein resides in the cytoplasm. It catalyses the reaction L-glutamate + ATP = L-glutamyl 5-phosphate + ADP. It participates in amino-acid biosynthesis; L-proline biosynthesis; L-glutamate 5-semialdehyde from L-glutamate: step 1/2. In terms of biological role, catalyzes the transfer of a phosphate group to glutamate to form L-glutamate 5-phosphate. This is Glutamate 5-kinase from Sphingopyxis alaskensis (strain DSM 13593 / LMG 18877 / RB2256) (Sphingomonas alaskensis).